The chain runs to 881 residues: Low-affinity phosphate transporter PHO90 (881 aa).

The region spanning 1–288 (MRFSHFLKYN…HLNTRTELIE (288 aa)) is the SPX domain. Transmembrane regions (helical) follow at residues 417–437 (IYFIILVTGLLLGIKTFNDAA), 456–476 (AIPLHITAFLVPLLVVLFKVL), 493–513 (ILAAMWSSTIMILLAGFTLGE), 514–534 (VLAQYNIAKVLASWLLAFAGC), 539–559 (VLLMAMCVVFFLSMWISNVAA), 581–601 (AQALVLGVALAANIGGMSSPI), 663–683 (FTVKQYYIITVTVATILLWCV), 691–711 (FGSSGQIAIIPIVLFFGTGLL), 718–738 (AFPWSIVILAMGGIALGKAVS), 758–778 (GVFAILCIFGILMLVVGTFVS), 805–825 (ILVFGCALLSSCGMGLASSGF), and 854–874 (ASILAFLCVITLGYGIMASVV).

Belongs to the CitM (TC 2.A.11) transporter family.

The protein resides in the membrane. Functionally, low-affinity phosphate transporter involved in the control of cellular phosphate levels. This is Low-affinity phosphate transporter PHO90 (PHO90) from Saccharomyces cerevisiae (strain ATCC 204508 / S288c) (Baker's yeast).